The following is a 438-amino-acid chain: Polycomb protein eed-B (438 aa).

A disordered region spans residues M1–W70. Positions S40 to A57 are enriched in polar residues. WD repeat units follow at residues D88–L131, D139–H182, G185–I225, G231–A270, I301–E338, S356–A396, and K405–R438.

It belongs to the WD repeat ESC family. In terms of assembly, component of the prc2/eed-ezh2 complex. Can interact with ezh2, hdac1 and taf9. Interacts with yy1.

It localises to the nucleus. In terms of biological role, polycomb group (PcG) protein. Component of the prc2/eed-ezh2 complex, which methylates 'Lys-9' and 'Lys-27' of histone H3, leading to transcriptional repression of the affected target gene. May play a role in neural induction. This Xenopus laevis (African clawed frog) protein is Polycomb protein eed-B (eed-b).